Here is a 181-residue protein sequence, read N- to C-terminus: Lectin beta-1 and beta-2 chains (181 aa).

Positions 119 and 121 each coordinate Mn(2+). Asp121, Phe123, Asn125, and Asp129 together coordinate Ca(2+). Mn(2+) is bound by residues Asp129 and His136.

This sequence belongs to the leguminous lectin family. As to quaternary structure, tetramer of two alpha and two beta chains.

This is Lectin beta-1 and beta-2 chains from Lathyrus ochrus (Cyprus-vetch).